Here is a 2203-residue protein sequence, read N- to C-terminus: Genome polyprotein (2203 aa).

Gly2 carries the N-myristoyl glycine; by host lipid modification. Topologically, residues 2 to 1513 (GAQVSTQKTG…HVSRAFICLQ (1512 aa)) are cytoplasmic. The amphipathic alpha-helix stretch occupies residues 567–583 (ELQNDVRQAVEGAIGRV). Active-site for protease 2A activity residues include His890 and Asp908. Positions 925 and 927 each coordinate Zn(2+). Cys979 acts as the For protease 2A activity in catalysis. The Zn(2+) site is built by Cys985 and His987. The membrane-binding stretch occupies residues 1119-1191 (SNGWLKKFTE…EQSAPSQSDQ (73 aa)). The interval 1119 to 1257 (SNGWLKKFTE…SPGAGKSVAT (139 aa)) is oligomerization. An RNA-binding region spans residues 1140–1144 (AVKIQ). Positions 1223 to 1379 (EKKMSNYIQF…SMYSQNGKIN (157 aa)) constitute an SF3 helicase domain. Residues Cys1387, Cys1399, and Cys1404 each coordinate Zn(2+). A C4-type; degenerate zinc finger spans residues 1387–1404 (CDEECCPVNFKRCCPLVC). The segment at 1431–1438 (EYNHRHSV) is RNA-binding. An oligomerization region spans residues 1442-1447 (LEALFQ). Residues 1514 to 1529 (ALTTFVSVAGIIYIIY) lie within the membrane without spanning it. At 1530 to 2203 (KLFAGFQGAY…TLRRKWLDSF (674 aa)) the chain is on the cytoplasmic side. At Tyr1539 the chain carries O-(5'-phospho-RNA)-tyrosine. The Peptidase C3 domain maps to 1559–1737 (GPAFEFAVAM…FSAALLRHYF (179 aa)). Residues His1598, Glu1629, and Cys1705 each act as for protease 3C activity in the active site. The RdRp catalytic domain occupies 1968-2084 (GHLIAFDYSG…SYPWPIDASL (117 aa)). Residues Asp1974 and Asp2070 each contribute to the Mg(2+) site.

This sequence belongs to the picornaviruses polyprotein family. In terms of assembly, interacts with capsid protein VP1 and capsid protein VP3 to form heterotrimeric protomers. Interacts with capsid protein VP0, and capsid protein VP3 to form heterotrimeric protomers. Five protomers subsequently associate to form pentamers which serve as building blocks for the capsid. Interacts with capsid protein VP2, capsid protein VP3 and capsid protein VP4 following cleavage of capsid protein VP0. As to quaternary structure, interacts with capsid protein VP1 and capsid protein VP3 in the mature capsid. In terms of assembly, interacts with capsid protein VP0 and capsid protein VP1 to form heterotrimeric protomers. Five protomers subsequently associate to form pentamers which serve as building blocks for the capsid. Interacts with capsid protein VP4 in the mature capsid. Interacts with protein 2C; this interaction may be important for virion morphogenesis. Interacts with capsid protein VP1 and capsid protein VP3. As to quaternary structure, homodimer. In terms of assembly, homohexamer; forms a hexameric ring structure with 6-fold symmetry characteristic of AAA+ ATPases. Interacts (via N-terminus) with host RTN3 (via reticulon domain); this interaction is important for viral replication. Interacts with capsid protein VP3; this interaction may be important for virion morphogenesis. Interacts with protein 3CD. As to quaternary structure, homodimer. Interacts with host GBF1. Interacts (via GOLD domain) with host ACBD3 (via GOLD domain); this interaction allows the formation of a viral protein 3A/ACBD3 heterotetramer with a 2:2 stoichiometry, which will stimulate the recruitment of host PI4KB in order to synthesize PI4P at the viral RNA replication sites. In terms of assembly, interacts with RNA-directed RNA polymerase. Interacts with protein 3AB and with RNA-directed RNA polymerase. As to quaternary structure, interacts with Viral protein genome-linked and with protein 3CD. It depends on Mg(2+) as a cofactor. Specific enzymatic cleavages in vivo by the viral proteases yield processing intermediates and the mature proteins. Post-translationally, myristoylation is required for the formation of pentamers during virus assembly. Further assembly of 12 pentamers and a molecule of genomic RNA generates the provirion. In terms of processing, during virion maturation, immature virions are rendered infectious following cleavage of VP0 into VP4 and VP2. This maturation seems to be an autocatalytic event triggered by the presence of RNA in the capsid and it is followed by a conformational change infectious virion. Myristoylation is required during RNA encapsidation and formation of the mature virus particle. Post-translationally, VPg is uridylylated by the polymerase into VPg-pUpU. This acts as a nucleotide-peptide primer for the genomic RNA replication.

It is found in the virion. It localises to the host cytoplasm. The protein resides in the host cytoplasmic vesicle membrane. Its subcellular location is the host nucleus. The enzyme catalyses a ribonucleoside 5'-triphosphate + H2O = a ribonucleoside 5'-diphosphate + phosphate + H(+). The catalysed reaction is Selective cleavage of Tyr-|-Gly bond in the picornavirus polyprotein.. It catalyses the reaction RNA(n) + a ribonucleoside 5'-triphosphate = RNA(n+1) + diphosphate. It carries out the reaction Selective cleavage of Gln-|-Gly bond in the poliovirus polyprotein. In other picornavirus reactions Glu may be substituted for Gln, and Ser or Thr for Gly.. Its activity is regulated as follows. Replication or transcription is subject to high level of random mutations by the nucleotide analog ribavirin. Functionally, forms an icosahedral capsid of pseudo T=3 symmetry with capsid proteins VP2 and VP3. The capsid is 300 Angstroms in diameter, composed of 60 copies of each capsid protein and enclosing the viral positive strand RNA genome. Capsid protein VP1 mainly forms the vertices of the capsid. Capsid protein VP1 interacts with host cell receptor to provide virion attachment to target host cells. This attachment induces virion internalization. Tyrosine kinases are probably involved in the entry process. After binding to its receptor, the capsid undergoes conformational changes. Capsid protein VP1 N-terminus (that contains an amphipathic alpha-helix) and capsid protein VP4 are externalized. Together, they shape a pore in the host membrane through which viral genome is translocated to host cell cytoplasm. Forms an icosahedral capsid of pseudo T=3 symmetry with capsid proteins VP2 and VP3. The capsid is 300 Angstroms in diameter, composed of 60 copies of each capsid protein and enclosing the viral positive strand RNA genome. Its function is as follows. Lies on the inner surface of the capsid shell. After binding to the host receptor, the capsid undergoes conformational changes. Capsid protein VP4 is released, Capsid protein VP1 N-terminus is externalized, and together, they shape a pore in the host membrane through which the viral genome is translocated into the host cell cytoplasm. In terms of biological role, component of immature procapsids, which is cleaved into capsid proteins VP4 and VP2 after maturation. Allows the capsid to remain inactive before the maturation step. Functionally, cysteine protease that cleaves viral polyprotein and specific host proteins. It is responsible for the autocatalytic cleavage between the P1 and P2 regions, which is the first cleavage occurring in the polyprotein. Also cleaves the host translation initiation factor EIF4G1, in order to shut down the capped cellular mRNA translation. Inhibits the host nucleus-cytoplasm protein and RNA trafficking by cleaving host members of the nuclear pores. Counteracts stress granule formation probably by antagonizing its assembly or promoting its dissassembly. Plays an essential role in the virus replication cycle by acting as a viroporin. Creates a pore in the host endoplasmic reticulum and as a consequence releases Ca2+ in the cytoplasm of infected cell. In turn, high levels of cytoplasmic calcium may trigger membrane trafficking and transport of viral ER-associated proteins to viroplasms, sites of viral genome replication. Its function is as follows. Induces and associates with structural rearrangements of intracellular membranes. Displays RNA-binding, nucleotide binding and NTPase activities. May play a role in virion morphogenesis and viral RNA encapsidation by interacting with the capsid protein VP3. In terms of biological role, localizes the viral replication complex to the surface of membranous vesicles. Together with protein 3CD binds the Cis-Active RNA Element (CRE) which is involved in RNA synthesis initiation. Acts as a cofactor to stimulate the activity of 3D polymerase, maybe through a nucleid acid chaperone activity. Functionally, localizes the viral replication complex to the surface of membranous vesicles. It inhibits host cell endoplasmic reticulum-to-Golgi apparatus transport and causes the disassembly of the Golgi complex, possibly through GBF1 interaction. This would result in depletion of MHC, trail receptors and IFN receptors at the host cell surface. Plays an essential role in viral RNA replication by recruiting ACBD3 and PI4KB at the viral replication sites, thereby allowing the formation of the rearranged membranous structures where viral replication takes place. Acts as a primer for viral RNA replication and remains covalently bound to viral genomic RNA. VPg is uridylylated prior to priming replication into VPg-pUpU. The oriI viral genomic sequence may act as a template for this. The VPg-pUpU is then used as primer on the genomic RNA poly(A) by the RNA-dependent RNA polymerase to replicate the viral genome. During genome replication, the VPg-RNA linkage is removed by the host TDP2, thereby accelerating replication. During the late stage of the replication cycle, host TDP2 is excluded from sites of viral RNA synthesis and encapsidation, allowing for the generation of progeny virions. Its function is as follows. Involved in the viral replication complex and viral polypeptide maturation. It exhibits protease activity with a specificity and catalytic efficiency that is different from protease 3C. Protein 3CD lacks polymerase activity. Protein 3CD binds to the 5'UTR of the viral genome. In terms of biological role, replicates the viral genomic RNA on the surface of intracellular membranes. May form linear arrays of subunits that propagate along a strong head-to-tail interaction called interface-I. Covalently attaches UMP to a tyrosine of VPg, which is used to prime RNA synthesis. The positive stranded RNA genome is first replicated at virus induced membranous vesicles, creating a dsRNA genomic replication form. This dsRNA is then used as template to synthesize positive stranded RNA genomes. ss(+)RNA genomes are either translated, replicated or encapsidated. Functionally, major viral protease that mediates proteolytic processing of the polyprotein. Cleaves host EIF5B, contributing to host translation shutoff. Also cleaves host PABPC1, contributing to host translation shutoff. Cleaves host NLRP1, triggers host N-glycine-mediated degradation of the autoinhibitory NLRP1 N-terminal fragment. The chain is Genome polyprotein from Echovirus 9 (strain Barty).